Reading from the N-terminus, the 376-residue chain is Succinyl-diaminopimelate desuccinylase (376 aa).

Histidine 67 is a binding site for Zn(2+). Aspartate 69 is an active-site residue. Aspartate 100 serves as a coordination point for Zn(2+). Glutamate 134 acts as the Proton acceptor in catalysis. Zn(2+)-binding residues include glutamate 135, glutamate 163, and histidine 349.

Belongs to the peptidase M20A family. DapE subfamily. In terms of assembly, homodimer. The cofactor is Zn(2+). Co(2+) is required as a cofactor.

The catalysed reaction is N-succinyl-(2S,6S)-2,6-diaminopimelate + H2O = (2S,6S)-2,6-diaminopimelate + succinate. It functions in the pathway amino-acid biosynthesis; L-lysine biosynthesis via DAP pathway; LL-2,6-diaminopimelate from (S)-tetrahydrodipicolinate (succinylase route): step 3/3. Catalyzes the hydrolysis of N-succinyl-L,L-diaminopimelic acid (SDAP), forming succinate and LL-2,6-diaminopimelate (DAP), an intermediate involved in the bacterial biosynthesis of lysine and meso-diaminopimelic acid, an essential component of bacterial cell walls. The chain is Succinyl-diaminopimelate desuccinylase from Shewanella woodyi (strain ATCC 51908 / MS32).